A 107-amino-acid chain; its full sequence is BolA-like protein 3 (107 aa).

It belongs to the BolA/IbaG family. As to quaternary structure, interacts with NFU1. Widely expressed.

Its subcellular location is the mitochondrion. Its function is as follows. Acts as a mitochondrial iron-sulfur (Fe-S) cluster assembly factor that facilitates (Fe-S) cluster insertion into a subset of mitochondrial proteins. Probably acts together with NFU1. The sequence is that of BolA-like protein 3 from Homo sapiens (Human).